The sequence spans 370 residues: Succinoglycan biosynthesis protein ExoH (370 aa).

The next 10 membrane-spanning stretches (helical) occupy residues 14 to 34 (ILLISGIVFVHVPYNPQWSPF), 46 to 66 (VFLGESLFRIGVPCLSAISGY), 88 to 108 (TVLLPFLIWSGSFFVVVYAIQ), 144 to 164 (LYFLRDLMLCILLSPLLALLV), 170 to 190 (VTLLALLAYAILPLPNGIFLK), 193 to 213 (ILFGFSAGIYASLHGVNIKML), 216 to 236 (FAAPIAAGFLAIAVVIAVGLY), 244 to 264 (LWLDMALRLTSIAGIIGSWAI), 282 to 302 (GLSFWIFCGHYPLLVLFWMIW), and 307 to 327 (LSYYPLFYFTAPFIAIAILVA). A disordered region spans residues 350 to 370 (AKRMATQPPQGAQAGYSPQQR).

The protein belongs to the acyltransferase 3 family.

The protein localises to the cell membrane. The protein operates within glycan metabolism; exopolysaccharide biosynthesis. Its function is as follows. Required for the succinyl modification of the seventh sugar (glucose) of the octasaccharide subunit of succinoglycan (EPS I). This is Succinoglycan biosynthesis protein ExoH (exoH) from Rhizobium meliloti (strain 1021) (Ensifer meliloti).